The following is a 124-amino-acid chain: Putative peptidyl-tRNA hydrolase (124 aa).

It belongs to the PTH2 family.

The catalysed reaction is an N-acyl-L-alpha-aminoacyl-tRNA + H2O = an N-acyl-L-amino acid + a tRNA + H(+). The sequence is that of Putative peptidyl-tRNA hydrolase from Fowlpox virus (strain NVSL) (FPV).